The chain runs to 225 residues: PKHD-type hydroxylase YbiX (225 aa).

One can recognise a Fe2OG dioxygenase domain in the interval 78–177 (TLSTPLFNRY…RVASFMWIQS (100 aa)). The Fe cation site is built by histidine 96, aspartate 98, and histidine 158. Arginine 168 contacts 2-oxoglutarate.

Fe(2+) serves as cofactor. L-ascorbate is required as a cofactor.

This chain is PKHD-type hydroxylase YbiX, found in Escherichia fergusonii (strain ATCC 35469 / DSM 13698 / CCUG 18766 / IAM 14443 / JCM 21226 / LMG 7866 / NBRC 102419 / NCTC 12128 / CDC 0568-73).